A 91-amino-acid polypeptide reads, in one-letter code: DNA-binding protein HU (91 aa).

Belongs to the bacterial histone-like protein family. Homodimer.

Functionally, histone-like DNA-binding protein which is capable of wrapping DNA to stabilize it, and thus to prevent its denaturation under extreme environmental conditions. The chain is DNA-binding protein HU (hup) from Lactococcus lactis subsp. lactis (strain IL1403) (Streptococcus lactis).